The primary structure comprises 160 residues: Putative pre-16S rRNA nuclease (160 aa).

It belongs to the YqgF nuclease family.

The protein localises to the cytoplasm. Functionally, could be a nuclease involved in processing of the 5'-end of pre-16S rRNA. This chain is Putative pre-16S rRNA nuclease, found in Cereibacter sphaeroides (strain ATCC 17025 / ATH 2.4.3) (Rhodobacter sphaeroides).